The sequence spans 201 residues: tRNA (guanine-N(7)-)-methyltransferase (201 aa).

Residues Glu-33, Glu-58, Asp-85, and Asp-106 each coordinate S-adenosyl-L-methionine. The active site involves Asp-106. Substrate is bound by residues Lys-110, Asp-142, and 180 to 183 (TTYE).

Belongs to the class I-like SAM-binding methyltransferase superfamily. TrmB family.

It catalyses the reaction guanosine(46) in tRNA + S-adenosyl-L-methionine = N(7)-methylguanosine(46) in tRNA + S-adenosyl-L-homocysteine. It participates in tRNA modification; N(7)-methylguanine-tRNA biosynthesis. Its function is as follows. Catalyzes the formation of N(7)-methylguanine at position 46 (m7G46) in tRNA. This is tRNA (guanine-N(7)-)-methyltransferase from Mesomycoplasma hyopneumoniae (strain 7448) (Mycoplasma hyopneumoniae).